A 158-amino-acid polypeptide reads, in one-letter code: Cyclic pyranopterin monophosphate synthase (158 aa).

Residues 76–78 (LCH) and 114–115 (ME) contribute to the substrate site. Aspartate 129 is a catalytic residue.

The protein belongs to the MoaC family. As to quaternary structure, homohexamer; trimer of dimers.

The enzyme catalyses (8S)-3',8-cyclo-7,8-dihydroguanosine 5'-triphosphate = cyclic pyranopterin phosphate + diphosphate. It functions in the pathway cofactor biosynthesis; molybdopterin biosynthesis. Catalyzes the conversion of (8S)-3',8-cyclo-7,8-dihydroguanosine 5'-triphosphate to cyclic pyranopterin monophosphate (cPMP). This is Cyclic pyranopterin monophosphate synthase from Shewanella frigidimarina (strain NCIMB 400).